The chain runs to 103 residues: Large ribosomal subunit protein bL21 (103 aa).

Belongs to the bacterial ribosomal protein bL21 family. In terms of assembly, part of the 50S ribosomal subunit. Contacts protein L20.

Its function is as follows. This protein binds to 23S rRNA in the presence of protein L20. In Pseudoalteromonas atlantica (strain T6c / ATCC BAA-1087), this protein is Large ribosomal subunit protein bL21.